Reading from the N-terminus, the 1352-residue chain is Patatin-like phospholipase domain-containing protein 7 (1352 aa).

Topologically, residues 1–36 (MQNEEDACLEAGYCLGTTLSSWRLHFMEEQSQSTML) are lumenal. The chain crosses the membrane as a helical span at residues 37 to 57 (MGIGIGALLTLAFVGITFFFV). Residues 58-1352 (YRRVRRLRRA…DQGPRLEHPS (1295 aa)) lie on the Cytoplasmic side of the membrane. 170–297 (VLGHFEKPLF…VRVVQIIMVR (128 aa)) provides a ligand contact to a nucleoside 3',5'-cyclic phosphate. A disordered region spans residues 340-364 (MSYGPEEQLERSLRPSEFSSSDHGS). Residues Ser341 and Ser379 each carry the phosphoserine modification. The interval 384-411 (SNHGEVDELRQSQGSGSNTSAFQESHEG) is disordered. Polar residues predominate over residues 394-406 (QSQGSGSNTSAFQ). A nucleoside 3',5'-cyclic phosphate contacts are provided by residues 499 to 585 (FLHV…YEIM) and 613 to 718 (ALDW…LGEK). Residues 681–967 (VHAVRDSELA…RGCAQVGILR (287 aa)) form an involved in the binding to lipid droplets region. In terms of domain architecture, PNPLA spans 950-1116 (LVLGGGGARG…INNLPADVAR (167 aa)). The GXGXXG signature appears at 954–959 (GGGARG). The GXSXG motif lies at 981 to 985 (GTSIG). The Nucleophile role is filled by Ser983. Residue Asp1103 is the Proton acceptor of the active site. The DGA/G signature appears at 1103-1105 (DGG). Residue Ser1280 is modified to Phosphoserine. Thr1284 carries the phosphothreonine modification. The segment at 1295-1352 (KETYADFQSTGIELDSDSEYEPSMLQGPPSLTSPEQSQDSFPWLPNQDDQGPRLEHPS) is disordered. Positions 1323-1334 (PSLTSPEQSQDS) are enriched in polar residues.

Belongs to the NTE family. As to expression, expressed in white and brown adipose tissue, cardiac muscle, skeletal muscle, and testis. Expressed in white adipose tissue, cardiac muscle, skeletal muscle, and testis.

It is found in the endoplasmic reticulum membrane. It localises to the lipid droplet. The catalysed reaction is a 1-acyl-sn-glycero-3-phosphocholine + H2O = sn-glycerol 3-phosphocholine + a fatty acid + H(+). It carries out the reaction 1-(9Z-octadecenoyl)-sn-glycero-3-phosphocholine + H2O = sn-glycerol 3-phosphocholine + (9Z)-octadecenoate + H(+). The enzyme catalyses 1-(9Z-octadecenoyl)-sn-glycero-3-phosphoethanolamine + H2O = sn-glycero-3-phosphoethanolamine + (9Z)-octadecenoate + H(+). It catalyses the reaction 1-(9Z-octadecenoyl)-sn-glycero-3-phospho-L-serine + H2O = sn-glycero-3-phospho-L-serine + (9Z)-octadecenoate + H(+). The catalysed reaction is 1-hexadecanoyl-sn-glycero-3-phosphocholine + H2O = sn-glycerol 3-phosphocholine + hexadecanoate + H(+). It carries out the reaction 1-hexadecanoyl-sn-glycero-3-phosphate + H2O = sn-glycerol 3-phosphate + hexadecanoate + H(+). CAMP does not regulate lysophospholipase activity in vitro. Slightly inhibited by organophosphorus (OP) compounds such as mipafox, which is likely why mice are less sensitive to distal axonophathy induced by OPs compared to humans. Functionally, lysophospholipase which preferentially deacylates unsaturated lysophosphatidylcholine (C18:1), generating glycerophosphocholine. Can also deacylate, to a lesser extent, lysophosphatidylethanolamine (C18:1), lysophosphatidyl-L-serine (C18:1) and lysophosphatidic acid (C16:0). Its function is as follows. Lysophospholipase. In terms of biological role, lacks lysophospholipase activity. The protein is Patatin-like phospholipase domain-containing protein 7 (Pnpla7) of Mus musculus (Mouse).